A 97-amino-acid polypeptide reads, in one-letter code: Small, acid-soluble spore protein gamma-type (97 aa).

Polar residues predominate over residues Met1–Val42. Residues Met1–Gly97 are disordered. 2 repeats span residues Gln23–Asn56 and Gln58–Asn91. Positions Lys43–Asn63 are enriched in low complexity. The span at Ala69–Arg78 shows a compositional bias: polar residues. Residues Gln79–Asn91 are compositionally biased toward low complexity.

It belongs to the gamma-type SASP family.

SASP are proteins degraded in the first minutes of spore germination and provide amino acids for both new protein synthesis and metabolism. These proteins may be involved in dormant spore's high resistance to UV light. This is Small, acid-soluble spore protein gamma-type (sasP-B) from Priestia megaterium (Bacillus megaterium).